A 246-amino-acid polypeptide reads, in one-letter code: uncharacterized protein (246 aa).

Positions 1 to 30 (MKKKQVSHAIIISVMLSFVIAVFHTIHASE) are cleaved as a signal peptide.

This is an uncharacterized protein from Bacillus subtilis (strain 168).